A 593-amino-acid polypeptide reads, in one-letter code: Mitoguardin 2 (593 aa).

2 consecutive transmembrane segments (helical) span residues 11 to 31 and 42 to 62; these read MIQA…TTFG and PGLR…ALAA. Disordered stretches follow at residues 98 to 134, 150 to 171, and 197 to 229; these read PSVK…HSGS, TAAC…TTDG, and VGQR…PESQ. Composition is skewed to low complexity over residues 106–116 and 124–134; these read SRRVQSPSSKS and SSIEPSKHSGS. The residue at position 132 (Ser132) is a Phosphoserine. The span at 205–218 shows a compositional bias: polar residues; it reads STPTPGDSLQNPDT. Thr206 bears the Phosphothreonine mark. Phosphoserine is present on residues Ser220, Ser224, and Ser228. Thr273 bears the Phosphothreonine mark. Ser276 and Ser295 each carry phosphoserine. The FFAT signature appears at 292–298; that stretch reads SFFSATE.

This sequence belongs to the mitoguardin family. As to quaternary structure, homodimer and heterodimer; forms heterodimers with MIGA1. Interacts with PLD6/MitoPLD. Interacts (via phosphorylated FFAT motif) with MOSPD2. In terms of processing, phosphorylation at Ser-295 of the FFAT motif activates interaction with MOSPD2.

Its subcellular location is the mitochondrion outer membrane. Functionally, regulator of mitochondrial fusion. Acts by forming homo- and heterodimers at the mitochondrial outer membrane and facilitating the formation of PLD6/MitoPLD dimers. May act by regulating phospholipid metabolism via PLD6/MitoPLD. The chain is Mitoguardin 2 from Mus musculus (Mouse).